The following is a 183-amino-acid chain: Large ribosomal subunit protein eL18 (183 aa).

The tract at residues 150–183 is disordered; that stretch reads RHFGPAPGAPRSHTKPYVRTKGHERARPRRRSNV. Over residues 161 to 183 the composition is skewed to basic residues; sequence SHTKPYVRTKGHERARPRRRSNV.

This sequence belongs to the eukaryotic ribosomal protein eL18 family.

It is found in the cytoplasm. This chain is Large ribosomal subunit protein eL18 (RpL18), found in Spodoptera frugiperda (Fall armyworm).